A 64-amino-acid chain; its full sequence is MRVLYLLFSFLFIFLMPLPGVFGGIGDPVTCLKNGAICHPVFCPRRYKQIGTCGLPGTKCCKKP.

Positions 1–23 are cleaved as a signal peptide; sequence MRVLYLLFSFLFIFLMPLPGVFG. Cystine bridges form between C31–C60, C38–C53, and C43–C61. The phosphatidylinositol 4,5-bisphosphate (PIP2) binding stretch occupies residues 33–48; that stretch reads KNGAICHPVFCPRRYK.

Belongs to the beta-defensin family. LAP/TAP subfamily. Monomer. Homodimer.

Its subcellular location is the secreted. Functionally, exhibits antimicrobial activity against Gram-negative bacteria and Gram-positive bacteria, with highest activity against Gram-negative bacteria. Antimicrobial activity against P.aruginosa seems to be salt-sensitive and is reduced with high salt concentrations greater than 25 mM. Also exhibits antimicrobial activity against the yeast C.albicans. Permeabilizes C.albicans cell membranes via targeting plasma membrane lipid phosphatidylinositol 4,5-bisphosphate (PIP2), thereby leading to cell fragmentation and cell death. Acts as a ligand for C-C chemokine receptor CCR6. Binds to CCR6 and induces chemotactic activity of CCR6-expressing cells, such as immature dendritic cells and memory T cells. The chain is Defensin beta 4A (DEFB4A) from Macaca mulatta (Rhesus macaque).